The primary structure comprises 590 residues: Aspartate--tRNA(Asp/Asn) ligase (590 aa).

Position 172 (glutamate 172) interacts with L-aspartate. Residues 196-199 (QLFK) form an aspartate region. Arginine 218 is a binding site for L-aspartate. ATP-binding positions include 218–220 (RDE) and glutamine 227. Histidine 449 provides a ligand contact to L-aspartate. Glutamate 484 is an ATP binding site. Arginine 491 serves as a coordination point for L-aspartate. 536–539 (GVDR) contacts ATP.

The protein belongs to the class-II aminoacyl-tRNA synthetase family. Type 1 subfamily. Homodimer.

Its subcellular location is the cytoplasm. The catalysed reaction is tRNA(Asx) + L-aspartate + ATP = L-aspartyl-tRNA(Asx) + AMP + diphosphate. In terms of biological role, aspartyl-tRNA synthetase with relaxed tRNA specificity since it is able to aspartylate not only its cognate tRNA(Asp) but also tRNA(Asn). Reaction proceeds in two steps: L-aspartate is first activated by ATP to form Asp-AMP and then transferred to the acceptor end of tRNA(Asp/Asn). This is Aspartate--tRNA(Asp/Asn) ligase from Francisella tularensis subsp. holarctica (strain FTNF002-00 / FTA).